Here is a 677-residue protein sequence, read N- to C-terminus: Methionine--tRNA ligase (677 aa).

The 'HIGH' region signature appears at 15–25; that stretch reads PYANGSIHLGH. Zn(2+) contacts are provided by C146, C149, C159, and C162. The 'KMSKS' region motif lies at 333 to 337; the sequence is KMSKS. K336 is an ATP binding site. Residues 575–677 enclose the tRNA-binding domain; the sequence is DFAKVDLRVA…AGAKPGHQVK (103 aa).

Belongs to the class-I aminoacyl-tRNA synthetase family. MetG type 1 subfamily. Homodimer. The cofactor is Zn(2+).

It is found in the cytoplasm. It catalyses the reaction tRNA(Met) + L-methionine + ATP = L-methionyl-tRNA(Met) + AMP + diphosphate. In terms of biological role, is required not only for elongation of protein synthesis but also for the initiation of all mRNA translation through initiator tRNA(fMet) aminoacylation. This chain is Methionine--tRNA ligase, found in Escherichia fergusonii (strain ATCC 35469 / DSM 13698 / CCUG 18766 / IAM 14443 / JCM 21226 / LMG 7866 / NBRC 102419 / NCTC 12128 / CDC 0568-73).